The following is a 76-amino-acid chain: Theta defensin subunit C (76 aa).

The signal sequence occupies residues 1 to 22 (MRTFAFLTAMLLLVALHAQAEA). Positions 23 to 64 (RQARADEAAIQEQPGADDQGMAHSFTRNESAVLPLSESERGL) are excised as a propeptide. Arg-65 participates in a covalent cross-link: Cyclopeptide (Arg-Cys) (interchain with C-73 in subunit A); in form BTD-4. A disulfide bridge connects residues Cys-68 and Cys-73. Cys-73 is covalently cross-linked (Cyclopeptide (Cys-Arg) (interchain with R-65 in subunit A); in form BTD-4). A propeptide spanning residues 74-76 (RLL) is cleaved from the precursor.

This sequence belongs to the alpha-defensin family. Theta subfamily. In terms of assembly, BTD-4 is a cyclic heterodimer composed of subunits A and C; disulfide-linked. Forms a cyclic peptide with subunit A (BTD-4). An additional intersubunit disulfide bond is formed.

BTD-4 has antimicrobial activity against the Gram-negative bacterium E.coli ML35, the Gram-positive bacterium S.aureus 502a, and the fungus C.albicans 16820. This is Theta defensin subunit C (BTDC) from Papio anubis (Olive baboon).